The sequence spans 572 residues: Arginine--tRNA ligase (572 aa).

The short motif at 121–131 (PNLAKEMHVGH) is the 'HIGH' region element.

The protein belongs to the class-I aminoacyl-tRNA synthetase family. As to quaternary structure, monomer.

It is found in the cytoplasm. The enzyme catalyses tRNA(Arg) + L-arginine + ATP = L-arginyl-tRNA(Arg) + AMP + diphosphate. The protein is Arginine--tRNA ligase of Chromobacterium violaceum (strain ATCC 12472 / DSM 30191 / JCM 1249 / CCUG 213 / NBRC 12614 / NCIMB 9131 / NCTC 9757 / MK).